The chain runs to 482 residues: ATP synthase subunit beta (482 aa).

Gly168–Thr175 serves as a coordination point for ATP.

It belongs to the ATPase alpha/beta chains family. In terms of assembly, F-type ATPases have 2 components, CF(1) - the catalytic core - and CF(0) - the membrane proton channel. CF(1) has five subunits: alpha(3), beta(3), gamma(1), delta(1), epsilon(1). CF(0) has three main subunits: a(1), b(2) and c(9-12). The alpha and beta chains form an alternating ring which encloses part of the gamma chain. CF(1) is attached to CF(0) by a central stalk formed by the gamma and epsilon chains, while a peripheral stalk is formed by the delta and b chains.

It localises to the cell membrane. It carries out the reaction ATP + H2O + 4 H(+)(in) = ADP + phosphate + 5 H(+)(out). In terms of biological role, produces ATP from ADP in the presence of a proton gradient across the membrane. The catalytic sites are hosted primarily by the beta subunits. The polypeptide is ATP synthase subunit beta (Corynebacterium urealyticum (strain ATCC 43042 / DSM 7109)).